Consider the following 96-residue polypeptide: Co-chaperonin GroES (96 aa).

Belongs to the GroES chaperonin family. As to quaternary structure, heptamer of 7 subunits arranged in a ring. Interacts with the chaperonin GroEL.

The protein resides in the cytoplasm. In terms of biological role, together with the chaperonin GroEL, plays an essential role in assisting protein folding. The GroEL-GroES system forms a nano-cage that allows encapsulation of the non-native substrate proteins and provides a physical environment optimized to promote and accelerate protein folding. GroES binds to the apical surface of the GroEL ring, thereby capping the opening of the GroEL channel. This chain is Co-chaperonin GroES, found in Shewanella denitrificans (strain OS217 / ATCC BAA-1090 / DSM 15013).